We begin with the raw amino-acid sequence, 719 residues long: Protein psiI (719 aa).

A signal peptide spans 1–19 (MKIIFNLLILFSLVNFINS). The Extracellular portion of the chain corresponds to 20-658 (QSTTQATTLK…ICQTGAIVST (639 aa)). 12 N-linked (GlcNAc...) asparagine glycosylation sites follow: N62, N105, N118, N151, N315, N379, N454, N488, N500, N538, N592, and N629. One can recognise a PA14 domain in the interval 119–261 (LTLNPSTGTY…YDYCGVCYGD (143 aa)). Residues 659-679 (AVVASVVVVGAVVLGAAIFAG) form a helical membrane-spanning segment. Residues 680 to 719 (KKGYDHWKANQGQVFASSNANPLYQQSNNGGENALFEAPQ) lie on the Cytoplasmic side of the membrane.

It belongs to the prespore-cell-inducing factor family.

The protein resides in the membrane. The protein is Protein psiI (psiI) of Dictyostelium discoideum (Social amoeba).